The sequence spans 34 residues: GILLDKLKNFAKTAGKGVLQSLLNTASCKLSGQC.

A disulfide bridge connects residues Cys-28 and Cys-34.

The protein belongs to the frog skin active peptide (FSAP) family. Brevinin subfamily. Expressed by the skin glands.

The protein localises to the secreted. Functionally, shows antibacterial activity against representative Gram-negative and Gram-positive bacterial species, and hemolytic activity. This is Brevinin-2Ec from Pelophylax lessonae (Pool frog).